We begin with the raw amino-acid sequence, 231 residues long: Cytidylate kinase (231 aa).

12-20 (GPSGAGKGT) contributes to the ATP binding site.

The protein belongs to the cytidylate kinase family. Type 1 subfamily.

Its subcellular location is the cytoplasm. The catalysed reaction is CMP + ATP = CDP + ADP. The enzyme catalyses dCMP + ATP = dCDP + ADP. The protein is Cytidylate kinase of Shewanella amazonensis (strain ATCC BAA-1098 / SB2B).